We begin with the raw amino-acid sequence, 356 residues long: Histidinol-phosphate aminotransferase (356 aa).

Lysine 214 is subject to N6-(pyridoxal phosphate)lysine.

This sequence belongs to the class-II pyridoxal-phosphate-dependent aminotransferase family. Histidinol-phosphate aminotransferase subfamily. In terms of assembly, homodimer. It depends on pyridoxal 5'-phosphate as a cofactor.

It catalyses the reaction L-histidinol phosphate + 2-oxoglutarate = 3-(imidazol-4-yl)-2-oxopropyl phosphate + L-glutamate. The protein operates within amino-acid biosynthesis; L-histidine biosynthesis; L-histidine from 5-phospho-alpha-D-ribose 1-diphosphate: step 7/9. In Shigella boydii serotype 4 (strain Sb227), this protein is Histidinol-phosphate aminotransferase.